The primary structure comprises 3357 residues: Versican core protein (3357 aa).

Residues 1–23 (MLINMKGILWMCSTLLLTHALHQ) form the signal peptide. The region spanning 24 to 146 (AKMETSPPVK…EDTQDTMSLA (123 aa)) is the Ig-like V-type domain. 5 cysteine pairs are disulfide-bonded: cysteine 44/cysteine 130, cysteine 172/cysteine 243, cysteine 196/cysteine 217, cysteine 270/cysteine 333, and cysteine 294/cysteine 315. N-linked (GlcNAc...) asparagine glycosylation occurs at asparagine 57. Link domains lie at 150-245 (VVFH…YCYV) and 251-347 (DVFH…YCFK). N-linked (GlcNAc...) asparagine glycans are attached at residues asparagine 330, asparagine 351, and asparagine 441. The segment at 348-1308 (PKQNISEATT…IIEVRENKTG (961 aa)) is GAG-alpha (glucosaminoglycan attachment domain). The segment covering 625–634 (EPKTNGKVTE) has biased composition (basic and acidic residues). Positions 625-646 (EPKTNGKVTEDEFGQSQPTTTF) are disordered. An O-linked (Xyl...) (chondroitin sulfate) serine glycan is attached at serine 660. Disordered regions lie at residues 801–863 (WPGD…KPLE) and 881–908 (TSTS…TTST). N-linked (GlcNAc...) asparagine glycosylation is present at asparagine 807. Asparagine 914 and asparagine 951 each carry an N-linked (GlcNAc...) asparagine glycan. Disordered stretches follow at residues 1010–1088 (SPGA…YPPG) and 1252–1288 (DHMT…PAAG). Composition is skewed to polar residues over residues 1017-1042 (TGVS…SSTA) and 1275-1286 (SKTQELSTSTPA). Residues asparagine 1305 and asparagine 1371 are each glycosylated (N-linked (GlcNAc...) asparagine). A GAG-beta region spans residues 1309–3051 (RLSDMIVSGH…VEGTAVYLPG (1743 aa)). Residues 1396–1406 (DPEAAEARRGQ) are compositionally biased toward basic and acidic residues. Disordered regions lie at residues 1396–1421 (DPEA…DSSA) and 1458–1524 (TYPE…AIEQ). Composition is skewed to polar residues over residues 1411-1421 (APSQNFPDSSA) and 1487-1498 (WSESITESSPNL). O-linked (Xyl...) (chondroitin sulfate) serine glycans are attached at residues serine 1517 and serine 1599. Residues 1664–1705 (LPSPDARPTTVWNSNSTSEWVSDKSFEGRKKKENEDEEGAVN) are disordered. The segment covering 1673-1683 (TVWNSNSTSEW) has biased composition (polar residues). N-linked (GlcNAc...) asparagine glycosylation occurs at asparagine 1678. The segment covering 1684-1697 (VSDKSFEGRKKKEN) has biased composition (basic and acidic residues). O-linked (Xyl...) (chondroitin sulfate) serine glycosylation is found at serine 1907 and serine 1931. The segment at 1926-1965 (VGMGGSDDERVRDTQTSSSIPTTSDNIYPVPDSKGPDSTV) is disordered. The segment covering 1939–1951 (TQTSSSIPTTSDN) has biased composition (polar residues). N-linked (GlcNAc...) asparagine glycosylation is present at asparagine 2053. O-linked (Xyl...) (chondroitin sulfate) serine glycans are attached at residues serine 2219 and serine 2226. N-linked (GlcNAc...) asparagine glycosylation is present at asparagine 2243. Over residues 2308–2322 (TLSHTGTEEPTTSTL) the composition is skewed to polar residues. Disordered stretches follow at residues 2308 to 2374 (TLSH…ATSP) and 2475 to 2494 (YPTS…EGIE). Asparagine 2361 is a glycosylation site (N-linked (GlcNAc...) asparagine). The segment covering 2475–2486 (YPTSTLPSTEPY) has biased composition (low complexity). Phosphoserine occurs at positions 2585 and 2586. N-linked (GlcNAc...) asparagine glycosylation occurs at asparagine 2626. O-linked (Xyl...) (chondroitin sulfate) serine glycosylation is found at serine 2696, serine 2697, and serine 2741. The segment at 2853 to 2908 (LGGNVHRTEPPSMSRDPALDVSEDESKHKLLEELETSPTKPETSQDFPNKAKDHIP) is disordered. The span at 2888–2899 (TSPTKPETSQDF) shows a compositional bias: polar residues. A glycan (N-linked (GlcNAc...) asparagine) is linked at asparagine 3029. The EGF-like 1 domain occupies 3051–3087 (GPDLCKTNPCLNGGTCYPTETSYVCTCAPGYSGDQCE). Cystine bridges form between cysteine 3055/cysteine 3066, cysteine 3060/cysteine 3075, cysteine 3077/cysteine 3086, cysteine 3093/cysteine 3104, cysteine 3098/cysteine 3113, cysteine 3115/cysteine 3124, cysteine 3131/cysteine 3142, cysteine 3159/cysteine 3251, cysteine 3227/cysteine 3243, cysteine 3258/cysteine 3301, and cysteine 3287/cysteine 3314. Residues 3089-3125 (DFDECHSNPCRNGATCVDGFNTFRCLCLPSYVGALCE) form the EGF-like 2; calcium-binding domain. A C-type lectin domain is found at 3138-3252 (FQGQCYKYFA…CNYHLTYTCK (115 aa)). A Sushi domain is found at 3256–3316 (VACGQPPVVE…WAMPKITCMN (61 aa)). Asparagine 3331 and asparagine 3341 each carry an N-linked (GlcNAc...) asparagine glycan. Residues 3331–3342 (NSSSAKDNSINT) are compositionally biased toward polar residues. The interval 3331–3357 (NSSSAKDNSINTSKHEHRWSRRQETRR) is disordered.

Belongs to the aggrecan/versican proteoglycan family. In terms of assembly, interacts with FBLN1. Phosphorylated by FAM20C in the extracellular medium. Post-translationally, proteolytically cleaved by ADAMTS5 and ADAMTS15 in the pericellular matrix surrounding myoblasts, facilitating myoblast contact and fusion which is required for skeletal muscle development and regeneration. In terms of tissue distribution, expressed in the retina (at protein level). Isoform V2: Only expressed in brain.

The protein localises to the secreted. Its subcellular location is the extracellular space. The protein resides in the extracellular matrix. It localises to the cell projection. It is found in the cilium. The protein localises to the photoreceptor outer segment. Its subcellular location is the interphotoreceptor matrix. May play a role in intercellular signaling and in connecting cells with the extracellular matrix. May take part in the regulation of cell motility, growth and differentiation. Binds hyaluronic acid. The polypeptide is Versican core protein (Vcan) (Mus musculus (Mouse)).